A 103-amino-acid polypeptide reads, in one-letter code: Small ribosomal subunit protein uS14c (103 aa).

Belongs to the universal ribosomal protein uS14 family. In terms of assembly, part of the 30S ribosomal subunit.

It localises to the plastid. It is found in the chloroplast. Functionally, binds 16S rRNA, required for the assembly of 30S particles. The chain is Small ribosomal subunit protein uS14c from Agrostis stolonifera (Creeping bentgrass).